The chain runs to 103 residues: Large ribosomal subunit protein eL14 (103 aa).

The protein belongs to the eukaryotic ribosomal protein eL14 family.

The chain is Large ribosomal subunit protein eL14 from Ignicoccus hospitalis (strain KIN4/I / DSM 18386 / JCM 14125).